We begin with the raw amino-acid sequence, 424 residues long: Pachytene checkpoint protein 2 homolog (424 aa).

An ATP-binding site is contributed by 171-178; it reads GPPGTGKT.

It belongs to the AAA ATPase family. PCH2 subfamily.

Functionally, plays a key role in chromosome recombination and chromosome structure development during meiosis. Required at early steps in meiotic recombination that leads to non-crossovers pathways. Also needed for efficient completion of homologous synapsis by influencing crossover distribution along the chromosomes affecting both crossovers and non-crossovers pathways. The sequence is that of Pachytene checkpoint protein 2 homolog (trip13) from Danio rerio (Zebrafish).